The chain runs to 160 residues: Cytochrome c-type biogenesis protein CcmE (160 aa).

Residues 1-9 lie on the Cytoplasmic side of the membrane; it reads MRGLKKKRR. A helical; Signal-anchor for type II membrane protein transmembrane segment spans residues 10–30; it reads IQIIAIAAVALTIATIMIGTA. Residues 31-160 are Periplasmic-facing; the sequence is MRDGINFFRS…DGGYGGASGS (130 aa). Heme contacts are provided by His-123 and Tyr-127. Residues 141–160 form a disordered region; it reads VYKDPNATDADGGYGGASGS.

Belongs to the CcmE/CycJ family.

It is found in the cell inner membrane. Functionally, heme chaperone required for the biogenesis of c-type cytochromes. Transiently binds heme delivered by CcmC and transfers the heme to apo-cytochromes in a process facilitated by CcmF and CcmH. The chain is Cytochrome c-type biogenesis protein CcmE from Dinoroseobacter shibae (strain DSM 16493 / NCIMB 14021 / DFL 12).